Reading from the N-terminus, the 211-residue chain is UPF0056 membrane protein YvbG (211 aa).

6 helical membrane passes run 1–21, 47–67, 69–89, 114–134, 150–170, and 188–208; these read MMFS…NPIG, ILSF…FKLF, INIH…AYNL, ISVT…ATVM, MIGI…SAFI, and LILA…MFPV.

This sequence belongs to the UPF0056 (MarC) family.

It localises to the cell membrane. The sequence is that of UPF0056 membrane protein YvbG (yvbG) from Bacillus subtilis (strain 168).